The primary structure comprises 129 residues: Small ribosomal subunit protein bS18c (129 aa).

Residues 1-20 (MGTSNTQKPQKQVPKRKKYK) form a disordered region.

Belongs to the bacterial ribosomal protein bS18 family. As to quaternary structure, part of the 30S ribosomal subunit.

The protein localises to the plastid. Its subcellular location is the chloroplast. The chain is Small ribosomal subunit protein bS18c from Stigeoclonium helveticum (Green alga).